We begin with the raw amino-acid sequence, 133 residues long: DNA-directed RNA polymerase subunit omega (133 aa).

The protein belongs to the RNA polymerase subunit omega family. In terms of assembly, the RNAP catalytic core consists of 2 alpha, 1 beta, 1 beta' and 1 omega subunit. When a sigma factor is associated with the core the holoenzyme is formed, which can initiate transcription.

The enzyme catalyses RNA(n) + a ribonucleoside 5'-triphosphate = RNA(n+1) + diphosphate. Its function is as follows. Promotes RNA polymerase assembly. Latches the N- and C-terminal regions of the beta' subunit thereby facilitating its interaction with the beta and alpha subunits. In Brucella canis (strain ATCC 23365 / NCTC 10854 / RM-666), this protein is DNA-directed RNA polymerase subunit omega.